Consider the following 426-residue polypeptide: Alpha/beta hydrolase pydG (426 aa).

The protein belongs to the AB hydrolase superfamily. In terms of assembly, homodimer.

It participates in mycotoxin biosynthesis. In terms of biological role, alpha/beta hydrolasee; part of the gene cluster that mediates the biosynthesis of pyrrocidines, fungal natural products containing a macrocyclic para-cyclophane connected to a decahydrofluorene ring system that show potent antibiotic activities toward Gram-negative bacteria. Within the pathway, pydG catalyzes the Knoevenagel condensation that affords the 3-pyrrolin-2-one ring, using as substrate the polyketide-tyrosyl acyl thioester product of pydA. The pathway begins with the PKS-NRPS pydA which, with the help of the trans-enoyl reductase pydC, synthesizes the polyketide-tyrosyl acyl thioester product which can be reductively off-loaded by the terminal reductase (R) domain in pydA. The alpha/beta hydrolase pydG is then required to catalyze the subsequent Knoevenagel condensation that affords the 3-pyrrolin-2-one ring, whereas the four proteins pydB, pydE, pydX and pydZ then function synergistically to form the cyclophane. PydB and the membrane-bound pydX and pydZ are lipid-binding proteins that can sequester and mold the pdyG product into the inverse S-shape. Binding of the medium chain reductase pydE to the complex would trigger the cascade oxidative cyclization. PydY is involved in the Diels-Alder cycloaddition that forms the decahydrofluorene core. Additional non-enzymatic hydroxylation yields pyrrocidine A2 which can be further reduced into pyrrocidine B by an endogenous reductase. The protein is Alpha/beta hydrolase pydG of Acremonium sp.